The following is a 232-amino-acid chain: Early E1A protein (232 aa).

The interaction with RB1 in competition with E2F1 stretch occupies residues 40–48 (PTLHDLFDV). A compositionally biased stretch (low complexity) spans 69–84 (TDSSASTEADSGFSPL). The segment at 69–97 (TDSSASTEADSGFSPLSTPPVSPIPPHPT) is disordered. The span at 85–97 (STPPVSPIPPHPT) shows a compositional bias: pro residues. Positions 107–111 (LLCLE) match the LXCXE motif, interaction with host RB1 motif. The segment at 146–164 (CLRCAFYQEQDDNALCGLC) is a zinc-finger region. Residues 175 to 232 (SAGAEEEDDEVIFVSAKPGGRKRSAATPCEPDGVSKRPCVPEPEQTEPLDLSLKPRPN) form a disordered region. Positions 222 to 226 (PLDLS) match the PXDLS motif, CTBP-binding motif. A Nuclear localization signal motif is present at residues 228–232 (KPRPN).

The protein belongs to the adenoviridae E1A protein family. Interacts with host UBE2I; this interaction interferes with polySUMOylation. Interacts with host RB1; this interaction induces the aberrant dissociation of RB1-E2F1 complex thereby disrupting the activity of RB1 and activating E2F1-regulated genes. Interacts with host ATF7; the interaction enhances ATF7-mediated viral transactivation activity which requires the zinc binding domains of both proteins. Isoform early E1A 32 kDa protein and isoform early E1A 26 kDa protein interact (via N-terminus) with CUL1 and E3 ubiquitin ligase RBX1; these interactions inhibit RBX1-CUL1-dependent elongation reaction of ubiquitin chains and attenuate ubiquitination of SCF(FBXW7) target proteins. Interacts (via PXLXP motif) with host ZMYND11/BS69 (via MYND-type zinc finger); this interaction inhibits E1A mediated transactivation. Interacts with host EP300; this interaction stimulates the acetylation of RB1 by recruiting EP300 and RB1 into a multimeric-protein complex. Interacts with host CTBP1 and CTBP2; this interaction seems to potentiate viral replication. Interacts with host DCAF7. Interacts with host DYRK1A. Interacts with host KPNA4; this interaction allows E1A import into the host nucleus. Interacts with host EP400; this interaction stabilizes MYC. Interacts with host TBP protein; this interaction probably disrupts the TBP-TATA complex.

It is found in the host nucleus. Its function is as follows. Plays a role in viral genome replication by driving entry of quiescent cells into the cell cycle. Stimulation of progression from G1 to S phase allows the virus to efficiently use the cellular DNA replicating machinery to achieve viral genome replication. E1A protein has both transforming and trans-activating activities. Induces the disassembly of the E2F1 transcription factor from RB1 by direct competition for the same binding site on RB1, with subsequent transcriptional activation of E2F1-regulated S-phase genes and of the E2 region of the adenoviral genome. Release of E2F1 leads to the ARF-mediated inhibition of MDM2 and causes TP53/p53 to accumulate because it is not targeted for degradation by MDM2-mediated ubiquitination anymore. This increase in TP53, in turn, would arrest the cell proliferation and direct its death but this effect is counteracted by the viral protein E1B-55K. Inactivation of the ability of RB1 to arrest the cell cycle is critical for cellular transformation, uncontrolled cellular growth and proliferation induced by viral infection. Interaction with RBX1 and CUL1 inhibits ubiquitination of the proteins targeted by SCF(FBXW7) ubiquitin ligase complex, and may be linked to unregulated host cell proliferation. The tumorigenesis-restraining activity of E1A may be related to the disruption of the host CtBP-CtIP complex through the CtBP binding motif. In Canine adenovirus serotype 2 (strain Toronto A 26-61) (CAdV-2), this protein is Early E1A protein.